Reading from the N-terminus, the 383-residue chain is Putative gustatory receptor 22c (383 aa).

The Cytoplasmic segment spans residues Met1–Arg11. A helical transmembrane segment spans residues Leu12–Tyr32. At Arg33–Arg45 the chain is on the extracellular side. The chain crosses the membrane as a helical span at residues Phe46–Gly66. The Cytoplasmic segment spans residues Gly67–His86. Residues Tyr87–Gly107 form a helical membrane-spanning segment. Over Ser108–Lys144 the chain is Extracellular. The N-linked (GlcNAc...) asparagine glycan is linked to Asn130. A helical transmembrane segment spans residues Trp145–Asn165. Residues Asn166–Met250 are Cytoplasmic-facing. A helical transmembrane segment spans residues Thr251–Leu271. The Extracellular segment spans residues Asp272–Phe279. The helical transmembrane segment at Ile280–Ile300 threads the bilayer. Residues Ala301–Met360 lie on the Cytoplasmic side of the membrane. The chain crosses the membrane as a helical span at residues Gly361–Met381. Topologically, residues Asn382–Leu383 are extracellular.

This sequence belongs to the insect chemoreceptor superfamily. Gustatory receptor (GR) family. Gr22e subfamily. In terms of tissue distribution, taste bristles in the foreleg and labial palps.

The protein resides in the cell membrane. Its function is as follows. Probable gustatory receptor which mediates acceptance or avoidance behavior, depending on its substrates. The polypeptide is Putative gustatory receptor 22c (Gr22c) (Drosophila melanogaster (Fruit fly)).